Consider the following 138-residue polypeptide: MSRIVAIDYGRKRTGIAVSDTMQIIANGLTTVPTHELLDFITNYVKQESVERIIIGLPKQMNNEVSENMKNIEPFVRSLKKRLPDMPVEYVDERFTSVLAHRTMLEAGLKKKDRQNKALVDEISATIILQSYLETKRL.

This sequence belongs to the YqgF nuclease family.

It localises to the cytoplasm. Could be a nuclease involved in processing of the 5'-end of pre-16S rRNA. The protein is Putative pre-16S rRNA nuclease of Bacteroides fragilis (strain ATCC 25285 / DSM 2151 / CCUG 4856 / JCM 11019 / LMG 10263 / NCTC 9343 / Onslow / VPI 2553 / EN-2).